A 338-amino-acid polypeptide reads, in one-letter code: Ketol-acid reductoisomerase (NADP(+)) (338 aa).

Residues M1–T181 enclose the KARI N-terminal Rossmann domain. NADP(+) is bound by residues Y24–Q27, R47, and S52. The active site involves H107. G133 is an NADP(+) binding site. Residues N182–I327 form the KARI C-terminal knotted domain. D190, E194, E226, and E230 together coordinate Mg(2+). S251 is a binding site for substrate.

Belongs to the ketol-acid reductoisomerase family. Requires Mg(2+) as cofactor.

It carries out the reaction (2R)-2,3-dihydroxy-3-methylbutanoate + NADP(+) = (2S)-2-acetolactate + NADPH + H(+). The enzyme catalyses (2R,3R)-2,3-dihydroxy-3-methylpentanoate + NADP(+) = (S)-2-ethyl-2-hydroxy-3-oxobutanoate + NADPH + H(+). The protein operates within amino-acid biosynthesis; L-isoleucine biosynthesis; L-isoleucine from 2-oxobutanoate: step 2/4. It participates in amino-acid biosynthesis; L-valine biosynthesis; L-valine from pyruvate: step 2/4. Its function is as follows. Involved in the biosynthesis of branched-chain amino acids (BCAA). Catalyzes an alkyl-migration followed by a ketol-acid reduction of (S)-2-acetolactate (S2AL) to yield (R)-2,3-dihydroxy-isovalerate. In the isomerase reaction, S2AL is rearranged via a Mg-dependent methyl migration to produce 3-hydroxy-3-methyl-2-ketobutyrate (HMKB). In the reductase reaction, this 2-ketoacid undergoes a metal-dependent reduction by NADPH to yield (R)-2,3-dihydroxy-isovalerate. The chain is Ketol-acid reductoisomerase (NADP(+)) from Paraburkholderia xenovorans (strain LB400).